The following is a 207-amino-acid chain: Sodium/potassium-transporting ATPase subunit beta-1-interacting protein 1 (207 aa).

The next 3 helical transmembrane spans lie at 2–22, 35–55, and 62–82; these read GKCS…VAAL, APIL…FGTV, and LILY…IICF. Asn-100 is a glycosylation site (N-linked (GlcNAc...) asparagine). The helical transmembrane segment at 147 to 167 threads the bilayer; sequence ALSSALQIFLALFGFVFACYV.

It belongs to the NKAIN family. In terms of assembly, interacts with ATP1B1 C-terminus. As to expression, detected in the brain only and specifically in neurons. Expressed in multiple regions such as cerebral cortex, thalamus, hippocampus, olfactory bulb and brainstem as well as in cerebellum with high expression in granular cell layer.

It localises to the cell membrane. This chain is Sodium/potassium-transporting ATPase subunit beta-1-interacting protein 1 (Nkain1), found in Mus musculus (Mouse).